Consider the following 360-residue polypeptide: DNA replication and repair protein RecF (360 aa).

An ATP-binding site is contributed by 30–37 (GHNGSGKT).

It belongs to the RecF family.

Its subcellular location is the cytoplasm. The RecF protein is involved in DNA metabolism; it is required for DNA replication and normal SOS inducibility. RecF binds preferentially to single-stranded, linear DNA. It also seems to bind ATP. In Shewanella sediminis (strain HAW-EB3), this protein is DNA replication and repair protein RecF.